We begin with the raw amino-acid sequence, 451 residues long: Crh-like protein 2 (451 aa).

The signal sequence occupies residues 1–21 (MQFNSLVLLAGATILSPFVQA). A GH16 domain is found at 22 to 241 (QTWTTCNPLN…FTKVPFTMYV (220 aa)). An intrachain disulfide couples C27 to C34. N31, N43, N49, and N59 each carry an N-linked (GlcNAc...) asparagine glycan. E121 acts as the Nucleophile in catalysis. E125 acts as the Proton donor in catalysis. Residue E125 coordinates chitin. N130, N143, and N165 each carry an N-linked (GlcNAc...) asparagine glycan. The chitin site is built by R206, W210, and T222. N-linked (GlcNAc...) asparagine glycosylation occurs at N273. Residues 305–325 (VYCGGGAAVAALVSAFLFTFL) form a helical membrane-spanning segment. An N-linked (GlcNAc...) asparagine glycan is attached at N366.

Belongs to the glycosyl hydrolase 16 family. CRH1 subfamily. Forms homodimers as well as heterodimers with other crh protein members crh1 and crh3. Dimerization may be necessary for the transglycosylation activity.

It is found in the membrane. The catalysed reaction is Random endo-hydrolysis of N-acetyl-beta-D-glucosaminide (1-&gt;4)-beta-linkages in chitin and chitodextrins.. Dual chitinase/transglycosylase that plays a role in cell wall architecture. Chitinase and transglycosylase activities are coupled. Required for the polysaccharide cross-linking at the septa and the cell wall. More specifically, transfers chitin to 1,6-beta-glucan in the cell wall. This chain is Crh-like protein 2, found in Botryotinia fuckeliana (strain B05.10) (Noble rot fungus).